Here is a 102-residue protein sequence, read N- to C-terminus: NADH-quinone oxidoreductase subunit K (102 aa).

The next 3 helical transmembrane spans lie at 6 to 26 (LIGIMILAAGLFAVGVFGVLA), 30 to 50 (MLFQLVALEVALSGPALGFIA), and 63 to 83 (MFILVLTLAAAEVAVGLALFL).

This sequence belongs to the complex I subunit 4L family. As to quaternary structure, NDH-1 is composed of 14 different subunits. Subunits NuoA, H, J, K, L, M, N constitute the membrane sector of the complex.

Its subcellular location is the cell inner membrane. It carries out the reaction a quinone + NADH + 5 H(+)(in) = a quinol + NAD(+) + 4 H(+)(out). In terms of biological role, NDH-1 shuttles electrons from NADH, via FMN and iron-sulfur (Fe-S) centers, to quinones in the respiratory chain. The immediate electron acceptor for the enzyme in this species is believed to be ubiquinone. Couples the redox reaction to proton translocation (for every two electrons transferred, four hydrogen ions are translocated across the cytoplasmic membrane), and thus conserves the redox energy in a proton gradient. This is NADH-quinone oxidoreductase subunit K from Rhodopseudomonas palustris (strain TIE-1).